Here is a 351-residue protein sequence, read N- to C-terminus: Phospho-N-acetylmuramoyl-pentapeptide-transferase (351 aa).

10 consecutive transmembrane segments (helical) span residues 3–23 (GIIAAAGISLLVSFLLLPPLI), 51–71 (TMGGIAIIFGTVVGYFGAHAV), 76–96 (PTVSGVLVILLFVGLGCVGFL), 113–133 (GAKMLGQIIVGVGFAIGVTMF), 152–172 (FGPPMAVWLFVIWALLLIVAT), 181–201 (GLDGLATGATILSLVAYVIIG), 223–243 (PLDLAVVAAAALGGCIAFLWF), 250–270 (IFMGDTGSLALGGLLVGLAIT), 275–295 (LLLLVIGGLFVLITASVIIQV), and 329–349 (FWIIQGLFVAAAMALFYLEWM).

Belongs to the glycosyltransferase 4 family. MraY subfamily. The cofactor is Mg(2+).

The protein resides in the cell membrane. The enzyme catalyses UDP-N-acetyl-alpha-D-muramoyl-L-alanyl-gamma-D-glutamyl-meso-2,6-diaminopimeloyl-D-alanyl-D-alanine + di-trans,octa-cis-undecaprenyl phosphate = di-trans,octa-cis-undecaprenyl diphospho-N-acetyl-alpha-D-muramoyl-L-alanyl-D-glutamyl-meso-2,6-diaminopimeloyl-D-alanyl-D-alanine + UMP. It functions in the pathway cell wall biogenesis; peptidoglycan biosynthesis. Its function is as follows. Catalyzes the initial step of the lipid cycle reactions in the biosynthesis of the cell wall peptidoglycan: transfers peptidoglycan precursor phospho-MurNAc-pentapeptide from UDP-MurNAc-pentapeptide onto the lipid carrier undecaprenyl phosphate, yielding undecaprenyl-pyrophosphoryl-MurNAc-pentapeptide, known as lipid I. In Thermobifida fusca (strain YX), this protein is Phospho-N-acetylmuramoyl-pentapeptide-transferase.